The sequence spans 229 residues: Putative germin-like protein subfamily 1 member 2 (229 aa).

The N-terminal stretch at 1–24 (MKGLVQFLVAKIILLVLASTFVHC) is a signal peptide. Cysteine 34 and cysteine 50 are disulfide-bonded. N-linked (GlcNAc...) asparagine glycans are attached at residues asparagine 38 and asparagine 71. The 152-residue stretch at 64 to 215 (SGLNIPGNTS…AFALDVNIVR (152 aa)) folds into the Cupin type-1 domain. The Mn(2+) site is built by histidine 112 and histidine 114. The N-linked (GlcNAc...) asparagine glycan is linked to asparagine 139. A Mn(2+)-binding site is contributed by histidine 163.

The protein belongs to the germin family. Oligomer (believed to be a pentamer but probably hexamer).

The protein localises to the secreted. It is found in the extracellular space. Its subcellular location is the apoplast. Functionally, may play a role in plant defense. Probably has no oxalate oxidase activity even if the active site is conserved. In Arabidopsis thaliana (Mouse-ear cress), this protein is Putative germin-like protein subfamily 1 member 2.